The following is a 218-amino-acid chain: Insulin-induced gene 2 protein (218 aa).

At 1–21 the chain is on the cytoplasmic side; that stretch reads MGDRENVSYGSRPILAQKMNL. The chain crosses the membrane as a helical span at residues 22 to 44; sequence LLRGFLLFLIGVFLALVLNLLQV. The Lumenal portion of the chain corresponds to 45–63; the sequence is QRNVTLFPPDVLSSLFSSA. The helical transmembrane segment at 64 to 81 threads the bilayer; it reads WWVPLCCGTAAAAIGLLY. Residues 82-96 are Cytoplasmic-facing; the sequence is PCIDRHLGEPHKFKR. Residues 97–119 traverse the membrane as a helical segment; the sequence is EWSSVMRCVAVFVGINHASAKVD. Topologically, residues 120–122 are lumenal; that stretch reads FAN. The helical transmembrane segment at 123–141 threads the bilayer; it reads NMQLSLTLAALSIGLWWTF. The Cytoplasmic portion of the chain corresponds to 142 to 146; that stretch reads DRSRS. A helical membrane pass occupies residues 147 to 168; sequence GLGLGIGISFFATLVSQLLVYN. Residues 169–182 lie on the Lumenal side of the membrane; that stretch reads GVYEYTAPDFLYVR. The helical transmembrane segment at 183–200 threads the bilayer; that stretch reads SWLPCIFFAGGITMGNIG. Residues 201-218 are Cytoplasmic-facing; it reads RQLEMYERKALVEKSHRD. The KxHxx motif lies at 212 to 218; sequence VEKSHRD.

Belongs to the INSIG family. In terms of assembly, interacts with scap; interaction is direct and only takes place in the presence of sterols; it prevents interaction between scap and the coat protein complex II (COPII). Associates with the SCAP-SREBP complex; association is mediated via its interaction with scap and only takes place in the presence of sterols.

The protein localises to the endoplasmic reticulum membrane. In terms of biological role, oxysterol-binding protein that mediates feedback control of cholesterol synthesis by controlling both endoplasmic reticulum to Golgi transport of scap and degradation of hmgcr. Acts as a negative regulator of cholesterol biosynthesis by mediating the retention of the SCAP-SREBP complex in the endoplasmic reticulum, thereby blocking the processing of sterol regulatory element-binding proteins (SREBPs). Binds oxysterol, including 22-hydroxycholesterol, 24-hydroxycholesterol, 25-hydroxycholesterol and 27-hydroxycholesterol, regulating interaction with scap and retention of the SCAP-SREBP complex in the endoplasmic reticulum. In presence of oxysterol, interacts with scap, retaining the SCAP-SREBP complex in the endoplasmic reticulum, thereby preventing scap from escorting SREBPs to the Golgi. Sterol deprivation reduce oxysterol-binding, disrupting the interaction between insig2 and scap, thereby promoting Golgi transport of the SCAP-SREBP complex, followed by processing and nuclear translocation of SREBPs. Also regulates cholesterol synthesis by regulating degradation of hmgcr. The protein is Insulin-induced gene 2 protein of Xenopus laevis (African clawed frog).